Consider the following 432-residue polypeptide: Peptidase B (432 aa).

Mn(2+)-binding residues include Lys196 and Asp201. Residue Lys208 is part of the active site. Positions 219, 278, and 280 each coordinate Mn(2+). The active site involves Arg282.

Belongs to the peptidase M17 family. In terms of assembly, homohexamer. Mn(2+) serves as cofactor.

The protein localises to the cytoplasm. The catalysed reaction is Release of an N-terminal amino acid, Xaa, from a peptide or arylamide. Xaa is preferably Glu or Asp but may be other amino acids, including Leu, Met, His, Cys and Gln.. Functionally, probably plays an important role in intracellular peptide degradation. This Yersinia pseudotuberculosis serotype O:1b (strain IP 31758) protein is Peptidase B.